Here is a 250-residue protein sequence, read N- to C-terminus: MKSRYLVFFLPLIVAKYTSAETVQPFHSPEESVNSQFYLPPPPGNDDPAYRYDKEAYFKGYAIKGSPRWKQAAEDADVSVENIARIFSPVVGAKINPKDTPETWNMLKNLLTMGGYYATASAKKYYMRTRPFVLFNHSTCRPEDENTLRKNGSYPSGHTAYGTLLALVLSEARPERAQELARRGWEFGQSRVICGAHWQSDVDAGRYVGAVEFARLQTIPAFQKSLAKVREELNDKNNLLSKEDHPKLNY.

Positions 1-20 are cleaved as a signal peptide; it reads MKSRYLVFFLPLIVAKYTSA.

It belongs to the class A bacterial acid phosphatase family. Homodimer.

It is found in the periplasm. It carries out the reaction a phosphate monoester + H2O = an alcohol + phosphate. The polypeptide is Non-specific acid phosphatase (phoN) (Salmonella typhimurium (strain LT2 / SGSC1412 / ATCC 700720)).